Consider the following 360-residue polypeptide: Putative transcription factor A494R (360 aa).

The segment at 153-175 (CTCGGQMELWVNSTQSDLVCNEC) is a zinc-finger region.

It belongs to the nucleo-cytoplasmic large DNA viruses (NCLDVs) VLTF-3 family.

Putative transcription factor. The chain is Putative transcription factor A494R from Paramecium bursaria Chlorella virus 1 (PBCV-1).